Here is a 302-residue protein sequence, read N- to C-terminus: Aspartate carbamoyltransferase catalytic subunit (302 aa).

Carbamoyl phosphate contacts are provided by Arg-49 and Thr-50. An L-aspartate-binding site is contributed by Lys-77. Carbamoyl phosphate is bound by residues Arg-99, His-126, and Gln-129. L-aspartate contacts are provided by Arg-159 and Arg-209. Carbamoyl phosphate-binding residues include Ala-250 and Pro-251.

The protein belongs to the aspartate/ornithine carbamoyltransferase superfamily. ATCase family. Heterododecamer (2C3:3R2) of six catalytic PyrB chains organized as two trimers (C3), and six regulatory PyrI chains organized as three dimers (R2).

It catalyses the reaction carbamoyl phosphate + L-aspartate = N-carbamoyl-L-aspartate + phosphate + H(+). It participates in pyrimidine metabolism; UMP biosynthesis via de novo pathway; (S)-dihydroorotate from bicarbonate: step 2/3. Functionally, catalyzes the condensation of carbamoyl phosphate and aspartate to form carbamoyl aspartate and inorganic phosphate, the committed step in the de novo pyrimidine nucleotide biosynthesis pathway. The protein is Aspartate carbamoyltransferase catalytic subunit of Staphylococcus carnosus (strain TM300).